We begin with the raw amino-acid sequence, 410 residues long: Metal tolerance protein 3 (410 aa).

Residues 1-58 (MDGDDRRTPLLGGEGGSTRPPSLRRRDSARSLRSTFLSRLPDKVRGGGDPERPAADVD) form a disordered region. Residues 1-114 (MDGDDRRTPL…EDKEQKQSES (114 aa)) are Cytoplasmic-facing. The span at 40–58 (LPDKVRGGGDPERPAADVD) shows a compositional bias: basic and acidic residues. A helical transmembrane segment spans residues 115–135 (AMKISNYANIILLVFKVYATI). Residues 136–140 (KTGSM) lie on the Vacuolar side of the membrane. A helical membrane pass occupies residues 141–161 (AIAASTLDSLLDFLAGGILYF). The Cytoplasmic segment spans residues 162 to 184 (THLTMKSVNIYKYPIGKLRVQPV). Residues 185–205 (GIIVFAAIMATLGFQVLIQAI) traverse the membrane as a helical segment. The Vacuolar segment spans residues 206–221 (EQLVENKAGEKMTPEQ). The helical transmembrane segment at 222–242 (LIWLYSIMLSATVVKLALYIY) threads the bilayer. At 243 to 258 (CRSSGNSIVQAYAKDH) the chain is on the cytoplasmic side. A helical membrane pass occupies residues 259–275 (YFDVVTNVVGLVAAVLG). Over 276–284 (DKFFWWIDP) the chain is Vacuolar. Residues 285–303 (VGAVLLAVYTIVNWSGTVY) form a helical membrane-spanning segment. The Cytoplasmic portion of the chain corresponds to 304-410 (ENAVTLVGQC…VRSRLPSTEP (107 aa)).

This sequence belongs to the cation diffusion facilitator (CDF) transporter (TC 2.A.4) family. SLC30A subfamily.

It localises to the vacuole membrane. Involved in sequestration of excess metal in the cytoplasm into vacuoles to maintain metal homeostasis. This Oryza sativa subsp. japonica (Rice) protein is Metal tolerance protein 3 (MTP3).